The primary structure comprises 166 residues: Cyanate hydratase (166 aa).

Catalysis depends on residues Arg-92, Glu-95, and Ser-118.

This sequence belongs to the cyanase family.

It catalyses the reaction cyanate + hydrogencarbonate + 3 H(+) = NH4(+) + 2 CO2. In terms of biological role, catalyzes the reaction of cyanate with bicarbonate to produce ammonia and carbon dioxide. In Zea mays (Maize), this protein is Cyanate hydratase.